The sequence spans 242 residues: Cysteine-rich venom protein helothermine (242 aa).

The N-terminal stretch at 1 to 19 is a signal peptide; sequence MILLSLYLCLAAMLHQSEG. Positions 41 to 169 constitute an SCP domain; the sequence is DKHNNLRRIV…TYKYYQVCQY (129 aa). Cystine bridges form between cysteine 77–cysteine 155, cysteine 94–cysteine 170, cysteine 150–cysteine 167, cysteine 189–cysteine 196, cysteine 192–cysteine 201, cysteine 205–cysteine 237, cysteine 214–cysteine 231, and cysteine 223–cysteine 235. The ShKT domain occupies 205–237; the sequence is CKQNDVYNNCPDLKKQVGCGHPIMKDCMATCKC.

This sequence belongs to the CRISP family. Expressed by the venom gland.

The protein resides in the secreted. Its function is as follows. Alters a variety of ion channel activities, including voltage-gated potassium channels (Kv), voltage-gated calcium channels (L-, N-, and P-type) (Cav) and ryanodine receptors (RyR). Is toxic to mice (causes lethargy, partial paralysis of rear limbs and lowering of body temperature). The polypeptide is Cysteine-rich venom protein helothermine (Heloderma horridum horridum (Mexican beaded lizard)).